The primary structure comprises 242 residues: ADP-dependent L-serine kinase SerK (242 aa).

Residue E30 is part of the active site. 4 residues coordinate ADP: S43, I49, W51, and K52. V68 is a binding site for O-phospho-L-serine. Residues D69, G70, H71, H72, and R73 each contribute to the ADP site. D69 is a binding site for Mg(2+). 3 residues coordinate O-phospho-L-serine: G70, H71, and H72. Residues W102, K221, T223, and H225 each contribute to the O-phospho-L-serine site.

The protein belongs to the SerK family. Mg(2+) serves as cofactor.

It catalyses the reaction L-serine + ADP = O-phospho-L-serine + AMP + H(+). It participates in amino-acid biosynthesis; L-cysteine biosynthesis; L-cysteine from L-serine: step 1/2. Its function is as follows. Free serine kinase that uses ADP to phosphorylate L-serine to yield O-phospho-L-serine and AMP. The sequence is that of ADP-dependent L-serine kinase SerK from Thermococcus kodakarensis (strain ATCC BAA-918 / JCM 12380 / KOD1) (Pyrococcus kodakaraensis (strain KOD1)).